The following is a 67-amino-acid chain: Large ribosomal subunit protein bL35 (67 aa).

Residues 1 to 16 show a composition bias toward basic residues; the sequence is MPKMKTKSGAKKRFRV. The interval 1 to 24 is disordered; the sequence is MPKMKTKSGAKKRFRVRPGGTVKR.

The protein belongs to the bacterial ribosomal protein bL35 family.

In Polaromonas naphthalenivorans (strain CJ2), this protein is Large ribosomal subunit protein bL35.